Here is a 316-residue protein sequence, read N- to C-terminus: ATP synthase gamma chain (316 aa).

This sequence belongs to the ATPase gamma chain family. In terms of assembly, F-type ATPases have 2 components, CF(1) - the catalytic core - and CF(0) - the membrane proton channel. CF(1) has five subunits: alpha(3), beta(3), gamma(1), delta(1), epsilon(1). CF(0) has three main subunits: a, b and c.

The protein resides in the cellular thylakoid membrane. In terms of biological role, produces ATP from ADP in the presence of a proton gradient across the membrane. The gamma chain is believed to be important in regulating ATPase activity and the flow of protons through the CF(0) complex. The chain is ATP synthase gamma chain from Prochlorococcus marinus subsp. pastoris (strain CCMP1986 / NIES-2087 / MED4).